The sequence spans 399 residues: Phosphoglycerate kinase (399 aa).

Substrate is bound by residues 21-23 (DFN), Arg37, 60-63 (HLGR), Arg119, and Arg152. ATP is bound by residues Lys205, Gly296, Glu327, and 353–356 (GGDT).

It belongs to the phosphoglycerate kinase family. As to quaternary structure, monomer.

It is found in the cytoplasm. The enzyme catalyses (2R)-3-phosphoglycerate + ATP = (2R)-3-phospho-glyceroyl phosphate + ADP. Its pathway is carbohydrate degradation; glycolysis; pyruvate from D-glyceraldehyde 3-phosphate: step 2/5. This Sulfurimonas denitrificans (strain ATCC 33889 / DSM 1251) (Thiomicrospira denitrificans (strain ATCC 33889 / DSM 1251)) protein is Phosphoglycerate kinase.